The following is a 131-amino-acid chain: D-ribose pyranase (131 aa).

Residue His20 is the Proton donor of the active site. Substrate-binding positions include Asp28, His98, and 120–122 (YAN).

It belongs to the RbsD / FucU family. RbsD subfamily. In terms of assembly, homodecamer.

The protein resides in the cytoplasm. The catalysed reaction is beta-D-ribopyranose = beta-D-ribofuranose. It participates in carbohydrate metabolism; D-ribose degradation; D-ribose 5-phosphate from beta-D-ribopyranose: step 1/2. Functionally, catalyzes the interconversion of beta-pyran and beta-furan forms of D-ribose. This Clostridium tetani (strain Massachusetts / E88) protein is D-ribose pyranase.